A 165-amino-acid polypeptide reads, in one-letter code: Small ribosomal subunit protein uS5 (165 aa).

An S5 DRBM domain is found at 13 to 76 (LEEKVLVVNR…EAAKKNLMKI (64 aa)).

The protein belongs to the universal ribosomal protein uS5 family. Part of the 30S ribosomal subunit. Contacts proteins S4 and S8.

In terms of biological role, with S4 and S12 plays an important role in translational accuracy. Functionally, located at the back of the 30S subunit body where it stabilizes the conformation of the head with respect to the body. The protein is Small ribosomal subunit protein uS5 of Chlamydia pneumoniae (Chlamydophila pneumoniae).